A 329-amino-acid chain; its full sequence is Delta-aminolevulinic acid dehydratase (329 aa).

Positions 122, 124, and 132 each coordinate Zn(2+). Lys199 (schiff-base intermediate with substrate) is an active-site residue. The 5-aminolevulinate site is built by Arg209 and Arg221. The active-site Schiff-base intermediate with substrate is Lys252. 5-aminolevulinate is bound by residues Ser279 and Tyr318.

This sequence belongs to the ALAD family. In terms of assembly, homooctamer. Zn(2+) serves as cofactor.

The enzyme catalyses 2 5-aminolevulinate = porphobilinogen + 2 H2O + H(+). It functions in the pathway porphyrin-containing compound metabolism; protoporphyrin-IX biosynthesis; coproporphyrinogen-III from 5-aminolevulinate: step 1/4. Functionally, catalyzes an early step in the biosynthesis of tetrapyrroles. Binds two molecules of 5-aminolevulinate per subunit, each at a distinct site, and catalyzes their condensation to form porphobilinogen. In Schizosaccharomyces pombe (strain 972 / ATCC 24843) (Fission yeast), this protein is Delta-aminolevulinic acid dehydratase (hem2).